Consider the following 193-residue polypeptide: Acyl carrier protein phosphodiesterase (193 aa).

The protein belongs to the AcpH family.

It carries out the reaction holo-[ACP] + H2O = apo-[ACP] + (R)-4'-phosphopantetheine + H(+). Functionally, converts holo-ACP to apo-ACP by hydrolytic cleavage of the phosphopantetheine prosthetic group from ACP. In Shigella boydii serotype 18 (strain CDC 3083-94 / BS512), this protein is Acyl carrier protein phosphodiesterase.